A 290-amino-acid polypeptide reads, in one-letter code: Aquaporin PIP2-1 (290 aa).

The disordered stretch occupies residues 1–20 (MGKDDVIESGAGGGEFAAKD). The next 2 membrane-spanning stretches (helical) occupy residues 43 to 63 (AVIA…ATVI) and 80 to 100 (CGGV…FVLV). The NPA 1 motif lies at 112–114 (NPA). 3 consecutive transmembrane segments (helical) span residues 131-151 (LLYI…VKAF), 173-193 (GTGL…VFSA), and 205-225 (VPVL…LATI). Residues 233 to 235 (NPA) carry the NPA 2 motif. A helical membrane pass occupies residues 255-275 (IFWVGPLVGAAIAAFYHQYIL).

This sequence belongs to the MIP/aquaporin (TC 1.A.8) family. PIP (TC 1.A.8.11) subfamily. Homomers. Can interact with PIP1-2 to form heteromers. Expressed in roots.

It is found in the cell membrane. Functionally, water channel required to facilitate the transport of water across cell membrane. Active as homomers. Increased activity when heteromerization with PIP1-2. The sequence is that of Aquaporin PIP2-1 (PIP2-1) from Zea mays (Maize).